Consider the following 73-residue polypeptide: Putative defensin-like protein 57 (73 aa).

The signal sequence occupies residues 1–25; sequence MRFTSMIFVLVVILINSLFNFNVLA. Disulfide bonds link Cys-37–Cys-71, Cys-41–Cys-64, Cys-50–Cys-69, and Cys-54–Cys-70.

It belongs to the DEFL family.

It localises to the secreted. The chain is Putative defensin-like protein 57 from Arabidopsis thaliana (Mouse-ear cress).